The following is a 654-amino-acid chain: tRNA 5-methylaminomethyl-2-thiouridine biosynthesis bifunctional protein MnmC (654 aa).

The tract at residues 1–235 (MSDFQHAQLD…KREMLGGTYQ (235 aa)) is tRNA (mnm(5)s(2)U34)-methyltransferase. The segment at 261–654 (VGGGLAGCAS…LRDLVRGQRG (394 aa)) is FAD-dependent cmnm(5)s(2)U34 oxidoreductase.

This sequence in the N-terminal section; belongs to the methyltransferase superfamily. tRNA (mnm(5)s(2)U34)-methyltransferase family. The protein in the C-terminal section; belongs to the DAO family. FAD serves as cofactor.

It is found in the cytoplasm. The enzyme catalyses 5-aminomethyl-2-thiouridine(34) in tRNA + S-adenosyl-L-methionine = 5-methylaminomethyl-2-thiouridine(34) in tRNA + S-adenosyl-L-homocysteine + H(+). Its function is as follows. Catalyzes the last two steps in the biosynthesis of 5-methylaminomethyl-2-thiouridine (mnm(5)s(2)U) at the wobble position (U34) in tRNA. Catalyzes the FAD-dependent demodification of cmnm(5)s(2)U34 to nm(5)s(2)U34, followed by the transfer of a methyl group from S-adenosyl-L-methionine to nm(5)s(2)U34, to form mnm(5)s(2)U34. In Pseudomonas paraeruginosa (strain DSM 24068 / PA7) (Pseudomonas aeruginosa (strain PA7)), this protein is tRNA 5-methylaminomethyl-2-thiouridine biosynthesis bifunctional protein MnmC.